Here is a 142-residue protein sequence, read N- to C-terminus: Large-conductance mechanosensitive channel (142 aa).

3 consecutive transmembrane segments (helical) span residues 10–30 (FAVKGNVIDLAVGVIIGGAFG), 40–60 (LIMPVVGLVFGKLDFSNLFIV), and 86–106 (GNFITVAVNFVILAFIIFVMV).

The protein belongs to the MscL family. As to quaternary structure, homopentamer.

Its subcellular location is the cell inner membrane. Functionally, channel that opens in response to stretch forces in the membrane lipid bilayer. May participate in the regulation of osmotic pressure changes within the cell. The polypeptide is Large-conductance mechanosensitive channel (Acidovorax ebreus (strain TPSY) (Diaphorobacter sp. (strain TPSY))).